Reading from the N-terminus, the 701-residue chain is Elongation factor G (701 aa).

Residues 8–290 (ERYRNIGISA…AVVDYLPAPT (283 aa)) form the tr-type G domain. GTP-binding positions include 17-24 (AHIDAGKT), 88-92 (DTPGH), and 142-145 (NKMD).

Belongs to the TRAFAC class translation factor GTPase superfamily. Classic translation factor GTPase family. EF-G/EF-2 subfamily.

It localises to the cytoplasm. Catalyzes the GTP-dependent ribosomal translocation step during translation elongation. During this step, the ribosome changes from the pre-translocational (PRE) to the post-translocational (POST) state as the newly formed A-site-bound peptidyl-tRNA and P-site-bound deacylated tRNA move to the P and E sites, respectively. Catalyzes the coordinated movement of the two tRNA molecules, the mRNA and conformational changes in the ribosome. The chain is Elongation factor G from Aeromonas hydrophila subsp. hydrophila (strain ATCC 7966 / DSM 30187 / BCRC 13018 / CCUG 14551 / JCM 1027 / KCTC 2358 / NCIMB 9240 / NCTC 8049).